We begin with the raw amino-acid sequence, 421 residues long: ATP-dependent RNA helicase RhlB (421 aa).

Residues 9–37 carry the Q motif motif; it reads QKFSDFALHPQVVEALEKKGFYNCTPIQA. One can recognise a Helicase ATP-binding domain in the interval 40–219; that stretch reads LPLTLAGRDV…FEQMNNAEYV (180 aa). Residue 53–60 participates in ATP binding; sequence AQTGTGKT. The DEAD box motif lies at 165–168; it reads DEAD. The Helicase C-terminal domain maps to 245–390; it reads RLLQTLIEEE…VSKYNPEALM (146 aa). The interval 396–421 is disordered; it reads PLRLTRSRPGNGPRRAGAPRNRRRSG. Residues 402-414 are compositionally biased toward low complexity; that stretch reads SRPGNGPRRAGAP.

Belongs to the DEAD box helicase family. RhlB subfamily. In terms of assembly, component of the RNA degradosome, which is a multiprotein complex involved in RNA processing and mRNA degradation.

It is found in the cytoplasm. The enzyme catalyses ATP + H2O = ADP + phosphate + H(+). DEAD-box RNA helicase involved in RNA degradation. Has RNA-dependent ATPase activity and unwinds double-stranded RNA. The chain is ATP-dependent RNA helicase RhlB from Salmonella paratyphi A (strain AKU_12601).